Here is a 330-residue protein sequence, read N- to C-terminus: NADH-quinone oxidoreductase subunit H (330 aa).

8 helical membrane passes run 3 to 23, 76 to 96, 118 to 138, 161 to 181, 188 to 208, 244 to 264, 272 to 292, and 307 to 327; these read AAFVIATIIKILIVLGLFSAL, PVFMIAPVITAATAFIAMAAI, VGLLFVLGVMAAGLYGPLLAG, EVVTGLSVLAPVMIVGSISLV, AGGMGNWLIWKQPLAFVLFLI, FFIGEYANMFTIGFLVSLIFL, FIPGAIAILIKVFFFFFLFLW, and WLCWKVLMPLAVINVVITGIV.

It belongs to the complex I subunit 1 family. In terms of assembly, NDH-1 is composed of 14 different subunits. Subunits NuoA, H, J, K, L, M, N constitute the membrane sector of the complex.

It localises to the cell inner membrane. It carries out the reaction a quinone + NADH + 5 H(+)(in) = a quinol + NAD(+) + 4 H(+)(out). NDH-1 shuttles electrons from NADH, via FMN and iron-sulfur (Fe-S) centers, to quinones in the respiratory chain. The immediate electron acceptor for the enzyme in this species is believed to be ubiquinone. Couples the redox reaction to proton translocation (for every two electrons transferred, four hydrogen ions are translocated across the cytoplasmic membrane), and thus conserves the redox energy in a proton gradient. This subunit may bind ubiquinone. This chain is NADH-quinone oxidoreductase subunit H, found in Nitratiruptor sp. (strain SB155-2).